Consider the following 510-residue polypeptide: Facilitated glucose transporter protein 1 (510 aa).

The tract at residues methionine 1 to glycine 29 is disordered. The Cytoplasmic portion of the chain corresponds to methionine 1–leucine 46. A compositionally biased stretch (low complexity) spans aspartate 8–glycine 29. The helical transmembrane segment at alanine 47–valine 67 threads the bilayer. At asparagine 68–serine 100 the chain is on the extracellular side. The helical transmembrane segment at valine 101–alanine 121 threads the bilayer. The Cytoplasmic segment spans residues aspartate 122–arginine 127. Residues glycine 128 to leucine 146 traverse the membrane as a helical segment. The Extracellular portion of the chain corresponds to alanine 147–arginine 160. The chain crosses the membrane as a helical span at residues leucine 161–isoleucine 181. Over serine 182–glutamine 195 the chain is Cytoplasmic. Glutamine 195 is a binding site for D-glucose. The helical transmembrane segment at leucine 196–threonine 216 threads the bilayer. Over glycine 217–arginine 219 the chain is Extracellular. The helical transmembrane segment at tryptophan 220–leucine 240 threads the bilayer. Topologically, residues cysteine 241–glycine 299 are cytoplasmic. A helical transmembrane segment spans residues alanine 300–isoleucine 320. Residues glutamine 315–glutamine 316, asparagine 321, and asparagine 352 contribute to the D-glucose site. Residues asparagine 321 to proline 341 lie on the Extracellular side of the membrane. A helical transmembrane segment spans residues phenylalanine 342–leucine 362. The Cytoplasmic portion of the chain corresponds to valine 363–leucine 373. The helical transmembrane segment at leucine 374–isoleucine 394 threads the bilayer. At glutamine 395–glycine 409 the chain is on the extracellular side. A helical transmembrane segment spans residues phenylalanine 410–valine 430. Tryptophan 427 contacts D-glucose. The Cytoplasmic segment spans residues serine 431–isoleucine 445. Residues alanine 446 to isoleucine 464 form a helical membrane-spanning segment. At asparagine 465–glutamine 470 the chain is on the extracellular side. The chain crosses the membrane as a helical span at residues tyrosine 471–valine 491. Topologically, residues proline 492 to lysine 510 are cytoplasmic.

The protein belongs to the major facilitator superfamily. Sugar transporter (TC 2.A.1.1) family. Glucose transporter subfamily. As to expression, isoform a is expressed in pharyngeal muscle and intestinal cells in both embryos and adults (at protein level).

The protein localises to the cell membrane. Its subcellular location is the basolateral cell membrane. In terms of biological role, facilitative glucose transporter that plays a role in glucose metabolism and regulation of longevity. May also play a role in lipid metabolism. Glucose transport activity of isoform a is competitively inhibited by mannose, galactose and fructose, suggesting ability to transport also other hexose sugars. This chain is Facilitated glucose transporter protein 1, found in Caenorhabditis elegans.